Here is a 212-residue protein sequence, read N- to C-terminus: ATP phosphoribosyltransferase (212 aa).

It belongs to the ATP phosphoribosyltransferase family. Short subfamily. Heteromultimer composed of HisG and HisZ subunits.

The protein localises to the cytoplasm. The catalysed reaction is 1-(5-phospho-beta-D-ribosyl)-ATP + diphosphate = 5-phospho-alpha-D-ribose 1-diphosphate + ATP. Its pathway is amino-acid biosynthesis; L-histidine biosynthesis; L-histidine from 5-phospho-alpha-D-ribose 1-diphosphate: step 1/9. Its function is as follows. Catalyzes the condensation of ATP and 5-phosphoribose 1-diphosphate to form N'-(5'-phosphoribosyl)-ATP (PR-ATP). Has a crucial role in the pathway because the rate of histidine biosynthesis seems to be controlled primarily by regulation of HisG enzymatic activity. This Citrifermentans bemidjiense (strain ATCC BAA-1014 / DSM 16622 / JCM 12645 / Bem) (Geobacter bemidjiensis) protein is ATP phosphoribosyltransferase.